The primary structure comprises 136 residues: Sec-independent protein translocase protein TatB (136 aa).

Residues 1-21 (MFDIGFPELALVAVIGLLVLG) form a helical membrane-spanning segment. Residues 89–136 (YEDMVEKNPATPMSSKASTPQTPSSGPDPQPVESHSHSDDASKQHDRS) form a disordered region. Over residues 99 to 115 (TPMSSKASTPQTPSSGP) the composition is skewed to polar residues. Residues 122 to 136 (SHSHSDDASKQHDRS) are compositionally biased toward basic and acidic residues.

Belongs to the TatB family. The Tat system comprises two distinct complexes: a TatABC complex, containing multiple copies of TatA, TatB and TatC subunits, and a separate TatA complex, containing only TatA subunits. Substrates initially bind to the TatABC complex, which probably triggers association of the separate TatA complex to form the active translocon.

The protein resides in the cell inner membrane. Its function is as follows. Part of the twin-arginine translocation (Tat) system that transports large folded proteins containing a characteristic twin-arginine motif in their signal peptide across membranes. Together with TatC, TatB is part of a receptor directly interacting with Tat signal peptides. TatB may form an oligomeric binding site that transiently accommodates folded Tat precursor proteins before their translocation. In Hahella chejuensis (strain KCTC 2396), this protein is Sec-independent protein translocase protein TatB.